A 417-amino-acid chain; its full sequence is Carboxypeptidase A2 (417 aa).

Residues 1–16 (MRLTPLLVALFGYIYC) form the signal peptide. Positions 17 to 112 (QETFVGDQVL…EMLFNQQRER (96 aa)) are cleaved as a propeptide — activation peptide. The region spanning 120 to 412 (AYHTLEEIYQ…LGLKTIMEHV (293 aa)) is the Peptidase M14 domain. 2 residues coordinate Zn(2+): His-177 and Glu-180. Residues 177–180 (HARE), Arg-235, and 252–253 (NR) contribute to the substrate site. Cys-246 and Cys-269 are joined by a disulfide. His-304 lines the Zn(2+) pocket. 305–306 (SY) is a substrate binding site. A disulfide bond links Cys-318 and Cys-352. Tyr-356 is a substrate binding site. Residue Glu-378 is the Proton donor/acceptor of the active site.

Belongs to the peptidase M14 family. The cofactor is Zn(2+).

The protein resides in the secreted. The catalysed reaction is Similar to that of carboxypeptidase A (EC 3.4.17.1), but with a preference for bulkier C-terminal residues.. Carboxypeptidase that catalyzes the release of a C-terminal amino acid, with a preference for large aromatic C-terminal residues. This chain is Carboxypeptidase A2 (Cpa2), found in Mus musculus (Mouse).